Consider the following 212-residue polypeptide: Large ribosomal subunit protein uL4 (212 aa).

It belongs to the universal ribosomal protein uL4 family. In terms of assembly, part of the 50S ribosomal subunit.

Its function is as follows. One of the primary rRNA binding proteins, this protein initially binds near the 5'-end of the 23S rRNA. It is important during the early stages of 50S assembly. It makes multiple contacts with different domains of the 23S rRNA in the assembled 50S subunit and ribosome. Forms part of the polypeptide exit tunnel. This Caulobacter sp. (strain K31) protein is Large ribosomal subunit protein uL4.